Consider the following 89-residue polypeptide: Small ribosomal subunit protein uS17 (89 aa).

Belongs to the universal ribosomal protein uS17 family. Part of the 30S ribosomal subunit.

One of the primary rRNA binding proteins, it binds specifically to the 5'-end of 16S ribosomal RNA. The protein is Small ribosomal subunit protein uS17 of Coxiella burnetii (strain Dugway 5J108-111).